The chain runs to 200 residues: Probable GTP-binding protein EngB (200 aa).

In terms of domain architecture, EngB-type G spans 25–199 (SGYEVAFAGR…ISVLDRWYEW (175 aa)). GTP is bound by residues 33–40 (GRSNAGKS), 60–64 (GRTQL), 78–81 (DLPG), 145–148 (TKAD), and 178–180 (FSS). Residues Ser40 and Thr62 each contribute to the Mg(2+) site.

This sequence belongs to the TRAFAC class TrmE-Era-EngA-EngB-Septin-like GTPase superfamily. EngB GTPase family. Requires Mg(2+) as cofactor.

Necessary for normal cell division and for the maintenance of normal septation. The polypeptide is Probable GTP-binding protein EngB (Legionella pneumophila (strain Paris)).